A 346-amino-acid chain; its full sequence is MKTYNVAIVGASGAVGQELIKGLENSFFPIKKFVPLASARSAGKKIRAFNKDYEILETTHEVFEKEEIDIAFFSAGGSVSEEFAISASKTALVIDNTSFFRLNKDVPLVVPEINAQEIFNAPLNIIANPNCSTIQMTQILNPLHLHFKIKSVIVSTYQAVSGAGNKGIESLKNELKTALEHLEKDPAIDLNQVLQAGAFAYPIAFNAIAHIDTFKENGYTKEELKMVHETHKIMGVDFPISATCVRVPVLRSHSESLSIAFEKEFDLKEVYEVLKNAPSVVVCDDPSHNLYPTPLKASHTDSVFIGRLRKDLFDKKTLHGFCVADQLRVGAATNALKIALHYIKNA.

Residues 12 to 15 (SGAV) and 40 to 41 (RS) each bind NADP(+). Arg-101 contributes to the phosphate binding site. The Acyl-thioester intermediate role is filled by Cys-131. Residue Gln-158 coordinates substrate. 161–162 (SG) serves as a coordination point for NADP(+). Lys-225 is a phosphate binding site. Residue Arg-246 participates in substrate binding. His-253 acts as the Proton acceptor in catalysis. Gln-326 contributes to the NADP(+) binding site.

The protein belongs to the aspartate-semialdehyde dehydrogenase family. Homodimer.

It carries out the reaction L-aspartate 4-semialdehyde + phosphate + NADP(+) = 4-phospho-L-aspartate + NADPH + H(+). It functions in the pathway amino-acid biosynthesis; L-lysine biosynthesis via DAP pathway; (S)-tetrahydrodipicolinate from L-aspartate: step 2/4. The protein operates within amino-acid biosynthesis; L-methionine biosynthesis via de novo pathway; L-homoserine from L-aspartate: step 2/3. Its pathway is amino-acid biosynthesis; L-threonine biosynthesis; L-threonine from L-aspartate: step 2/5. In terms of biological role, catalyzes the NADPH-dependent formation of L-aspartate-semialdehyde (L-ASA) by the reductive dephosphorylation of L-aspartyl-4-phosphate. The protein is Aspartate-semialdehyde dehydrogenase of Helicobacter pylori (strain J99 / ATCC 700824) (Campylobacter pylori J99).